The primary structure comprises 285 residues: tRNA pseudouridine synthase A (285 aa).

Asp69 functions as the Nucleophile in the catalytic mechanism. Substrate is bound at residue Tyr127.

Belongs to the tRNA pseudouridine synthase TruA family. Homodimer.

It carries out the reaction uridine(38/39/40) in tRNA = pseudouridine(38/39/40) in tRNA. Functionally, formation of pseudouridine at positions 38, 39 and 40 in the anticodon stem and loop of transfer RNAs. In Pseudomonas aeruginosa (strain ATCC 15692 / DSM 22644 / CIP 104116 / JCM 14847 / LMG 12228 / 1C / PRS 101 / PAO1), this protein is tRNA pseudouridine synthase A.